A 553-amino-acid chain; its full sequence is Glutamate--tRNA ligase (553 aa).

Residues 98–108 carry the 'HIGH' region motif; the sequence is PNPSGPLHIGH.

This sequence belongs to the class-I aminoacyl-tRNA synthetase family. Glutamate--tRNA ligase type 2 subfamily.

The protein resides in the cytoplasm. The catalysed reaction is tRNA(Glu) + L-glutamate + ATP = L-glutamyl-tRNA(Glu) + AMP + diphosphate. Catalyzes the attachment of glutamate to tRNA(Glu) in a two-step reaction: glutamate is first activated by ATP to form Glu-AMP and then transferred to the acceptor end of tRNA(Glu). This chain is Glutamate--tRNA ligase, found in Methanocaldococcus jannaschii (strain ATCC 43067 / DSM 2661 / JAL-1 / JCM 10045 / NBRC 100440) (Methanococcus jannaschii).